The following is a 558-amino-acid chain: Dihydroxy-acid dehydratase (558 aa).

Aspartate 81 lines the Mg(2+) pocket. Position 122 (cysteine 122) interacts with [2Fe-2S] cluster. The Mg(2+) site is built by aspartate 123 and lysine 124. Position 124 is an N6-carboxylysine (lysine 124). Residue cysteine 195 coordinates [2Fe-2S] cluster. Glutamate 447 serves as a coordination point for Mg(2+). The Proton acceptor role is filled by serine 473.

Belongs to the IlvD/Edd family. Homodimer. [2Fe-2S] cluster is required as a cofactor. Requires Mg(2+) as cofactor.

It carries out the reaction (2R)-2,3-dihydroxy-3-methylbutanoate = 3-methyl-2-oxobutanoate + H2O. The enzyme catalyses (2R,3R)-2,3-dihydroxy-3-methylpentanoate = (S)-3-methyl-2-oxopentanoate + H2O. It functions in the pathway amino-acid biosynthesis; L-isoleucine biosynthesis; L-isoleucine from 2-oxobutanoate: step 3/4. The protein operates within amino-acid biosynthesis; L-valine biosynthesis; L-valine from pyruvate: step 3/4. In terms of biological role, functions in the biosynthesis of branched-chain amino acids. Catalyzes the dehydration of (2R,3R)-2,3-dihydroxy-3-methylpentanoate (2,3-dihydroxy-3-methylvalerate) into 2-oxo-3-methylpentanoate (2-oxo-3-methylvalerate) and of (2R)-2,3-dihydroxy-3-methylbutanoate (2,3-dihydroxyisovalerate) into 2-oxo-3-methylbutanoate (2-oxoisovalerate), the penultimate precursor to L-isoleucine and L-valine, respectively. The chain is Dihydroxy-acid dehydratase from Bacillus subtilis (strain 168).